The chain runs to 100 residues: Osteocalcin (100 aa).

The signal sequence occupies residues 1-23 (MRALTLLALLALAALCIAGQAGA). Residues 24–51 (KPSGAESSKGAAFVSKQEGSEVVKRPRR) constitute a propeptide that is removed on maturation. Residues 52–98 (YLYQWLGAPVPYPDPLEPRREVCELNPDCDELADHIGFQEAYRRFYG) enclose the Gla domain. Ca(2+) is bound by residues Glu-68, Glu-72, Glu-75, and Asp-81. Glu-68 is modified (4-carboxyglutamate; partial). 4-carboxyglutamate occurs at positions 72 and 75. Cys-74 and Cys-80 are oxidised to a cystine.

The protein belongs to the osteocalcin/matrix Gla protein family. Gamma-carboxyglutamate residues are formed by vitamin K dependent carboxylation by GGCX. These residues are essential for the binding of calcium. Decarboxylation promotes the hormone activity.

The protein resides in the secreted. Functionally, bone protein that constitutes 1-2% of the total bone protein, and which acts as a negative regulator of bone formation. Functions to limit bone formation without impairing bone resorption or mineralization. It binds strongly to apatite and calcium. The uncarboxylated form acts as a hormone secreted by osteoblasts, which regulates different cellular processes, such as energy metabolism, male fertility and brain development. Regulates of energy metabolism by acting as a hormone favoring pancreatic beta-cell proliferation, insulin secretion and sensitivity and energy expenditure. Uncarboxylated osteocalcin hormone also promotes testosterone production in the testes: acts as a ligand for G protein-coupled receptor GPRC6A at the surface of Leydig cells, initiating a signaling response that promotes the expression of enzymes required for testosterone synthesis in a CREB-dependent manner. Also acts as a regulator of brain development: osteocalcin hormone crosses the blood-brain barrier and acts as a ligand for GPR158 on neurons, initiating a signaling response that prevents neuronal apoptosis in the hippocampus, favors the synthesis of all monoamine neurotransmitters and inhibits that of gamma-aminobutyric acid (GABA). Osteocalcin also crosses the placenta during pregnancy and maternal osteocalcin is required for fetal brain development. This chain is Osteocalcin (BGLAP), found in Homo sapiens (Human).